The sequence spans 112 residues: UPF0482 protein SG1468 (112 aa).

An N-terminal signal peptide occupies residues 1 to 22 (MNTIPTRCLLGGLLALSLLAYA).

It belongs to the UPF0482 family.

This is UPF0482 protein SG1468 from Sodalis glossinidius (strain morsitans).